The primary structure comprises 264 residues: Thymidylate synthase (264 aa).

Position 21 (Arg21) interacts with dUMP. His51 is a binding site for (6R)-5,10-methylene-5,6,7,8-tetrahydrofolate. 126–127 (RR) provides a ligand contact to dUMP. Cys146 serves as the catalytic Nucleophile. DUMP contacts are provided by residues 166–169 (RSGD), Asn177, and 207–209 (HLY). Asp169 serves as a coordination point for (6R)-5,10-methylene-5,6,7,8-tetrahydrofolate. Ala263 provides a ligand contact to (6R)-5,10-methylene-5,6,7,8-tetrahydrofolate.

It belongs to the thymidylate synthase family. Bacterial-type ThyA subfamily. In terms of assembly, homodimer.

Its subcellular location is the cytoplasm. The enzyme catalyses dUMP + (6R)-5,10-methylene-5,6,7,8-tetrahydrofolate = 7,8-dihydrofolate + dTMP. It participates in pyrimidine metabolism; dTTP biosynthesis. Its function is as follows. Catalyzes the reductive methylation of 2'-deoxyuridine-5'-monophosphate (dUMP) to 2'-deoxythymidine-5'-monophosphate (dTMP) while utilizing 5,10-methylenetetrahydrofolate (mTHF) as the methyl donor and reductant in the reaction, yielding dihydrofolate (DHF) as a by-product. This enzymatic reaction provides an intracellular de novo source of dTMP, an essential precursor for DNA biosynthesis. This chain is Thymidylate synthase, found in Brevibacillus brevis (strain 47 / JCM 6285 / NBRC 100599).